A 195-amino-acid chain; its full sequence is RILP-like protein 2 (195 aa).

Positions 8 to 92 constitute an RH1 domain; that stretch reads SPTQAFDKDV…RTETDRVVAE (85 aa). Residues 58-149 adopt a coiled-coil conformation; that stretch reads LEMFETMVNK…AQEELQLYKS (92 aa). Residues 115 to 185 form the RH2 domain; sequence RPRFTMQELK…ITEESKEKST (71 aa).

Belongs to the RILPL family.

The protein resides in the cytoplasm. The protein localises to the cytosol. It is found in the cytoskeleton. It localises to the microtubule organizing center. Its subcellular location is the centrosome. The protein resides in the cell projection. The protein localises to the cilium. Its function is as follows. Involved in cell shape and neuronal morphogenesis, positively regulating the establishment and maintenance of dendritic spines. Plays a role in cellular protein transport. The polypeptide is RILP-like protein 2 (rilpl2) (Danio rerio (Zebrafish)).